The primary structure comprises 406 residues: Type IV pilus assembly protein PilC (406 aa).

4 helical membrane passes run 69–91 (IFSRQLATMLGAGLTLLQALAIL), 171–191 (YPVIVFVFAVGVAYFLLTGIV), 211–231 (FLIAVSDLLRAATLPLLLLAV), and 377–397 (MIIFLGVIVGMIVAGMFLPLF).

The protein belongs to the GSP F family. Homotetramer. Interacts with PilB.

The protein resides in the cell inner membrane. In terms of biological role, essential inner membrane component of the type IV pilus (T4P) that plays a role in surface and host cell adhesion, colonization, biofilm maturation, virulence, and twitching, a form of surface-associated motility facilitated by cycles of extension, adhesion, and retraction of T4P fibers. Controls both pilus assembly and disassembly and plays an important role in PilB localization to the complex and ATPase activity. The chain is Type IV pilus assembly protein PilC from Thermus thermophilus (strain ATCC 27634 / DSM 579 / HB8).